Reading from the N-terminus, the 293-residue chain is tRNA pseudouridine synthase B (293 aa).

Catalysis depends on Asp39, which acts as the Nucleophile.

It belongs to the pseudouridine synthase TruB family. Type 1 subfamily.

The catalysed reaction is uridine(55) in tRNA = pseudouridine(55) in tRNA. Its function is as follows. Responsible for synthesis of pseudouridine from uracil-55 in the psi GC loop of transfer RNAs. This is tRNA pseudouridine synthase B from Rickettsia bellii (strain RML369-C).